The chain runs to 159 residues: Cell number regulator 4 (159 aa).

The helical transmembrane segment at 52–74 (LAGLLYCLLLHAGVAVVPCHCIY) threads the bilayer.

This sequence belongs to the cornifelin family. In terms of tissue distribution, expressed in roots, coleoptiles, leaves, stalks, apical meristems, immature ears, endosperm, pericarp and tassel spikelets.

The protein localises to the membrane. This chain is Cell number regulator 4 (CNR4), found in Zea mays (Maize).